The chain runs to 186 residues: Protein GrpE (186 aa).

Basic and acidic residues-rich tracts occupy residues 1–13 (MSDN…EEQH) and 23–34 (EETHQAEDAVEH). Positions 1–34 (MSDNKTELNEEQHNATAEGEVSEETHQAEDAVEH) are disordered.

The protein belongs to the GrpE family. Homodimer.

It localises to the cytoplasm. In terms of biological role, participates actively in the response to hyperosmotic and heat shock by preventing the aggregation of stress-denatured proteins, in association with DnaK and GrpE. It is the nucleotide exchange factor for DnaK and may function as a thermosensor. Unfolded proteins bind initially to DnaJ; upon interaction with the DnaJ-bound protein, DnaK hydrolyzes its bound ATP, resulting in the formation of a stable complex. GrpE releases ADP from DnaK; ATP binding to DnaK triggers the release of the substrate protein, thus completing the reaction cycle. Several rounds of ATP-dependent interactions between DnaJ, DnaK and GrpE are required for fully efficient folding. This Hydrogenovibrio crunogenus (strain DSM 25203 / XCL-2) (Thiomicrospira crunogena) protein is Protein GrpE.